The sequence spans 500 residues: NADH-quinone oxidoreductase subunit N (500 aa).

The next 14 helical transmembrane spans lie at 13–33, 42–62, 79–99, 111–131, 133–153, 168–188, 211–231, 245–265, 281–301, 321–341, 342–362, 386–406, 424–444, and 461–481; these read VMMP…IDLF, LLGL…LSLW, FAKS…LLSI, GEFY…ASSG, LITL…LVAI, VITG…IFGF, YVLS…LASA, TTPV…VIVL, ASML…TMII, VAHA…MFEA, IWFY…ILQV, AIAM…AGFI, VLAS…FGIF, and PPGV…LGVF.

The protein belongs to the complex I subunit 2 family. In terms of assembly, NDH-1 is composed of 14 different subunits. Subunits NuoA, H, J, K, L, M, N constitute the membrane sector of the complex.

The protein localises to the cell membrane. The catalysed reaction is a quinone + NADH + 5 H(+)(in) = a quinol + NAD(+) + 4 H(+)(out). NDH-1 shuttles electrons from NADH, via FMN and iron-sulfur (Fe-S) centers, to quinones in the respiratory chain. The immediate electron acceptor for the enzyme in this species is believed to be a menaquinone. Couples the redox reaction to proton translocation (for every two electrons transferred, four hydrogen ions are translocated across the cytoplasmic membrane), and thus conserves the redox energy in a proton gradient. This chain is NADH-quinone oxidoreductase subunit N, found in Anoxybacillus flavithermus (strain DSM 21510 / WK1).